Here is a 78-residue protein sequence, read N- to C-terminus: Small ribosomal subunit protein bS18 (78 aa).

The protein belongs to the bacterial ribosomal protein bS18 family. As to quaternary structure, part of the 30S ribosomal subunit. Forms a tight heterodimer with protein bS6.

Functionally, binds as a heterodimer with protein bS6 to the central domain of the 16S rRNA, where it helps stabilize the platform of the 30S subunit. This is Small ribosomal subunit protein bS18 from Lactobacillus acidophilus (strain ATCC 700396 / NCK56 / N2 / NCFM).